A 203-amino-acid chain; its full sequence is dITP/XTP pyrophosphatase (203 aa).

7–12 (SGNLHK) provides a ligand contact to substrate. E47 and D77 together coordinate Mg(2+). The active-site Proton acceptor is the D77. Residues S78, 160-163 (FGYD), K183, and 188-189 (HR) each bind substrate.

This sequence belongs to the HAM1 NTPase family. Homodimer. Mg(2+) serves as cofactor.

The catalysed reaction is XTP + H2O = XMP + diphosphate + H(+). It catalyses the reaction dITP + H2O = dIMP + diphosphate + H(+). It carries out the reaction ITP + H2O = IMP + diphosphate + H(+). Functionally, pyrophosphatase that catalyzes the hydrolysis of nucleoside triphosphates to their monophosphate derivatives, with a high preference for the non-canonical purine nucleotides XTP (xanthosine triphosphate), dITP (deoxyinosine triphosphate) and ITP. Seems to function as a house-cleaning enzyme that removes non-canonical purine nucleotides from the nucleotide pool, thus preventing their incorporation into DNA/RNA and avoiding chromosomal lesions. The polypeptide is dITP/XTP pyrophosphatase (Opitutus terrae (strain DSM 11246 / JCM 15787 / PB90-1)).